Here is a 428-residue protein sequence, read N- to C-terminus: Histidine--tRNA ligase (428 aa).

This sequence belongs to the class-II aminoacyl-tRNA synthetase family. In terms of assembly, homodimer.

It is found in the cytoplasm. The enzyme catalyses tRNA(His) + L-histidine + ATP = L-histidyl-tRNA(His) + AMP + diphosphate + H(+). The protein is Histidine--tRNA ligase of Chromohalobacter salexigens (strain ATCC BAA-138 / DSM 3043 / CIP 106854 / NCIMB 13768 / 1H11).